The primary structure comprises 273 residues: Large ribosomal subunit protein uL2cz/uL2cy (273 aa).

2 disordered regions span residues Met1–Val22 and Pro225–Lys273.

The protein belongs to the universal ribosomal protein uL2 family. In terms of assembly, part of the 50S ribosomal subunit.

It is found in the plastid. It localises to the chloroplast. In Saccharum hybrid (Sugarcane), this protein is Large ribosomal subunit protein uL2cz/uL2cy (rpl2-A).